Reading from the N-terminus, the 120-residue chain is DNA-binding protein HQ_1105A (120 aa).

The segment at 1–55 (MSETPDDLDELRQQRMEELRDQADGQQSQTSDNTAAAQEAAREKAEAQQEALLKQ) is disordered. A compositionally biased stretch (basic and acidic residues) spans 10-23 (ELRQQRMEELRDQA). Polar residues predominate over residues 24 to 34 (DGQQSQTSDNT).

It belongs to the PDCD5 family.

In Haloquadratum walsbyi (strain DSM 16790 / HBSQ001), this protein is DNA-binding protein HQ_1105A.